Consider the following 345-residue polypeptide: NADH-quinone oxidoreductase subunit H (345 aa).

Transmembrane regions (helical) follow at residues 15 to 35, 82 to 102, 115 to 135, 161 to 181, 190 to 210, 240 to 262, 278 to 298, and 309 to 329; these read MLLQ…FMVY, FVYF…FVVI, VGIL…IMGG, LGLI…TAIV, LLNW…VSAL, YLLF…SLLF, WWMV…KAIV, and IGWK…AILA.

It belongs to the complex I subunit 1 family. NDH-1 is composed of at least 14 different subunits, Nqo1 to Nqo14. The complex has a L-shaped structure, with the hydrophobic arm (subunits Nqo7, Nqo8, Nqo10 to Nqo14) embedded in the inner membrane and the hydrophilic peripheral arm (subunits Nqo1 to Nqo6, Nqo9) protruding into the bacterial cytoplasm. The hydrophilic domain contains all the redox centers. NADH-quinone oxidoreductase forms a supercomplex with ubiquinol-cytochrome c reductase complex (complex III or cytochrome b-c1 complex) and cytochrome c oxidase (complex IV), which stabilizes the NADH-quinone oxidoreductase complex.

Its subcellular location is the cell inner membrane. It catalyses the reaction a quinone + NADH + 5 H(+)(in) = a quinol + NAD(+) + 4 H(+)(out). In terms of biological role, NDH-1 shuttles electrons from NADH, via FMN and iron-sulfur (Fe-S) centers, to quinones in the respiratory chain. The immediate electron acceptor for the enzyme in this species is believed to be ubiquinone. Couples the redox reaction to proton translocation (for every two electrons transferred, four hydrogen ions are translocated across the cytoplasmic membrane), and thus conserves the redox energy in a proton gradient. This subunit may bind ubiquinone. The polypeptide is NADH-quinone oxidoreductase subunit H (Paracoccus denitrificans (strain Pd 1222)).